The primary structure comprises 393 residues: Formate-dependent phosphoribosylglycinamide formyltransferase (393 aa).

Residues 22–23 (EL) and glutamate 82 each bind N(1)-(5-phospho-beta-D-ribosyl)glycinamide. ATP is bound by residues arginine 114, lysine 155, 160–165 (SSGHGQ), 195–198 (EGFI), and glutamate 203. Residues 119–308 (RLAAEELGLK…QFALHARAIL (190 aa)) form the ATP-grasp domain. Mg(2+)-binding residues include glutamate 267 and glutamate 279. N(1)-(5-phospho-beta-D-ribosyl)glycinamide contacts are provided by residues aspartate 286, lysine 356, and 363 to 364 (RR).

Belongs to the PurK/PurT family. Homodimer.

The enzyme catalyses N(1)-(5-phospho-beta-D-ribosyl)glycinamide + formate + ATP = N(2)-formyl-N(1)-(5-phospho-beta-D-ribosyl)glycinamide + ADP + phosphate + H(+). Its pathway is purine metabolism; IMP biosynthesis via de novo pathway; N(2)-formyl-N(1)-(5-phospho-D-ribosyl)glycinamide from N(1)-(5-phospho-D-ribosyl)glycinamide (formate route): step 1/1. Functionally, involved in the de novo purine biosynthesis. Catalyzes the transfer of formate to 5-phospho-ribosyl-glycinamide (GAR), producing 5-phospho-ribosyl-N-formylglycinamide (FGAR). Formate is provided by PurU via hydrolysis of 10-formyl-tetrahydrofolate. The chain is Formate-dependent phosphoribosylglycinamide formyltransferase from Actinobacillus pleuropneumoniae serotype 3 (strain JL03).